Consider the following 413-residue polypeptide: MSAEIICVGTELLLGDIVNTNVQFLAKELANLGIPHYYQTVVGDNPTRLREVITIASKRASILLFTGGLGPTPDDLTTETIAQCFHSPLVEKAEIIEDIQDKFKARGRQMNENNRKQALIPKGATILPNPTGTAPGIIWEPIPNVTIMTFPGVPSEMKRMWSETAVPHLKSQGWGKEVIFSRMLRFRGIGESSLATKVNRFFNLTNPTVAPYASLGEVRLRISAKTASETEANAIIEPVAQEIIKIAGEDYFGQDDDTLGKVVGELLRQKQQTVSVAESCTGGGLGAMFTEIAGSSDYFWGGVIAYDNCVKMSLLEVSAEALDHHGAVSDIVAQQMALGIKKRLETDWGMSITGIAGPGGGTDIKPVGLVYIGIADPDGNVESVECTFGDRSRDIIRYLSSCTALDQLRRKLI.

The protein belongs to the CinA family.

In Crocosphaera subtropica (strain ATCC 51142 / BH68) (Cyanothece sp. (strain ATCC 51142)), this protein is CinA-like protein.